The primary structure comprises 545 residues: CTP synthase (545 aa).

Residues 1–265 (MSKYIFVTGG…LVPIAKQLDL (265 aa)) are amidoligase domain. Position 13 (Ser13) interacts with CTP. Ser13 lines the UTP pocket. ATP is bound by residues 14-19 (SLGKGI) and Asp71. Positions 71 and 139 each coordinate Mg(2+). CTP-binding positions include 146–148 (DIE), 186–191 (KTKPTQ), and Lys222. UTP is bound by residues 186-191 (KTKPTQ) and Lys222. The region spanning 290–544 (KIAFVGKYLQ…VENAYKCQRS (255 aa)) is the Glutamine amidotransferase type-1 domain. Gly355 contributes to the L-glutamine binding site. The Nucleophile; for glutamine hydrolysis role is filled by Cys382. L-glutamine-binding positions include 383–386 (LGMQ), Glu406, and Arg473. Catalysis depends on residues His517 and Glu519.

It belongs to the CTP synthase family. As to quaternary structure, homotetramer.

It catalyses the reaction UTP + L-glutamine + ATP + H2O = CTP + L-glutamate + ADP + phosphate + 2 H(+). The catalysed reaction is L-glutamine + H2O = L-glutamate + NH4(+). The enzyme catalyses UTP + NH4(+) + ATP = CTP + ADP + phosphate + 2 H(+). Its pathway is pyrimidine metabolism; CTP biosynthesis via de novo pathway; CTP from UDP: step 2/2. With respect to regulation, allosterically activated by GTP, when glutamine is the substrate; GTP has no effect on the reaction when ammonia is the substrate. The allosteric effector GTP functions by stabilizing the protein conformation that binds the tetrahedral intermediate(s) formed during glutamine hydrolysis. Inhibited by the product CTP, via allosteric rather than competitive inhibition. Its function is as follows. Catalyzes the ATP-dependent amination of UTP to CTP with either L-glutamine or ammonia as the source of nitrogen. Regulates intracellular CTP levels through interactions with the four ribonucleotide triphosphates. In Nautilia profundicola (strain ATCC BAA-1463 / DSM 18972 / AmH), this protein is CTP synthase.